We begin with the raw amino-acid sequence, 703 residues long: UvrABC system protein B (703 aa).

The region spanning Thr-33–Arg-190 is the Helicase ATP-binding domain. Gly-46–Thr-53 contributes to the ATP binding site. The Beta-hairpin motif lies at Tyr-99–Ile-122. One can recognise a Helicase C-terminal domain in the interval Gln-436–Ile-589. The region spanning Ala-659–Glu-694 is the UVR domain.

This sequence belongs to the UvrB family. In terms of assembly, forms a heterotetramer with UvrA during the search for lesions. Interacts with UvrC in an incision complex.

The protein resides in the cytoplasm. The UvrABC repair system catalyzes the recognition and processing of DNA lesions. A damage recognition complex composed of 2 UvrA and 2 UvrB subunits scans DNA for abnormalities. Upon binding of the UvrA(2)B(2) complex to a putative damaged site, the DNA wraps around one UvrB monomer. DNA wrap is dependent on ATP binding by UvrB and probably causes local melting of the DNA helix, facilitating insertion of UvrB beta-hairpin between the DNA strands. Then UvrB probes one DNA strand for the presence of a lesion. If a lesion is found the UvrA subunits dissociate and the UvrB-DNA preincision complex is formed. This complex is subsequently bound by UvrC and the second UvrB is released. If no lesion is found, the DNA wraps around the other UvrB subunit that will check the other stand for damage. The sequence is that of UvrABC system protein B from Bifidobacterium longum subsp. infantis (strain ATCC 15697 / DSM 20088 / JCM 1222 / NCTC 11817 / S12).